The primary structure comprises 48 residues: uncharacterized protein (48 aa).

The tract at residues 1-48 (MVREKKNPSSAAVSAASVKGDAGPTQHYGGGKRTSQNQQYKKHNMGQS) is disordered. Residues 9–18 (SSAAVSAASV) show a composition bias toward low complexity.

This is an uncharacterized protein from Bacillus subtilis (strain 168).